The primary structure comprises 146 residues: Hemoglobin subunit beta (146 aa).

The region spanning 2–146 is the Globin domain; it reads QWTAEEKQLI…VAHALARKYH (145 aa). Heme b-binding residues include His-63 and His-92.

This sequence belongs to the globin family. As to quaternary structure, heterotetramer of two alpha chains and two beta chains. Red blood cells.

In terms of biological role, involved in oxygen transport from the lung to the various peripheral tissues. In Sturnus vulgaris (Starling), this protein is Hemoglobin subunit beta (HBB).